We begin with the raw amino-acid sequence, 142 residues long: Probable transport accessory protein MmpS1 (142 aa).

2 consecutive transmembrane segments (helical) span residues 8–28 and 81–101; these read FWIP…VSRL and VVNA…AVVA.

Belongs to the MmpS family.

It is found in the cell membrane. The chain is Probable transport accessory protein MmpS1 (mmpS1) from Mycobacterium bovis (strain ATCC BAA-935 / AF2122/97).